A 501-amino-acid chain; its full sequence is Endosomal/lysosomal proton channel TMEM175 (501 aa).

The disordered stretch occupies residues 1–20; it reads MAAPRAATPGPGGGARKPEL. At 1 to 31 the chain is on the cytoplasmic side; that stretch reads MAAPRAATPGPGGGARKPELDLELGSSTQTS. Residues 32-54 traverse the membrane as a helical segment; it reads HRLLAYSDALLSIIATVMILPVA. Positions 33-39 match the RxxxFSD motif 1 motif; it reads RLLAYSD. The Lumenal segment spans residues 55-75; sequence HTKIHPDQKLGESVQQLLLTK. The interval 56–61 is short helix H1-1; the sequence is TKIHPD. The segment at 63–69 is short helix H2-1; sequence KLGESVQ. The chain crosses the membrane as a helical span at residues 76 to 98; sequence IAVYLMTFLIVTVAWAAHVRLFQ. Over 99-104 the chain is Cytoplasmic; sequence VIELID. The chain crosses the membrane as a helical span at residues 105 to 126; the sequence is DVLALLNLACMMIITFLPYTFS. At 127–136 the chain is on the lumenal side; the sequence is LMASFPGVPF. A helical membrane pass occupies residues 137–158; sequence GIFLFSVCAVVIGLIQAVIVVY. Topologically, residues 159–182 are cytoplasmic; that stretch reads GFYHPHLLNQQIQVSENQNFYKRH. A helical transmembrane segment spans residues 183-203; it reads ILKIILRGPALCFLAAIFSFF. Topologically, residues 204–208 are lumenal; it reads FIPLS. A helical membrane pass occupies residues 209–228; it reads YLLLGLVIVFPHLSRFITWC. Over 229–257 the chain is Cytoplasmic; that stretch reads KTKIVGHRDEEEASYSLETFSFYLSEPLS. A helical transmembrane segment spans residues 258–282; it reads KERVEAFSDGVYAIVATLLILDICE. The short motif at 260 to 266 is the RxxxFSD motif 2 element; it reads RVEAFSD. The Lumenal portion of the chain corresponds to 283-309; that stretch reads DNVPDPREVGEKFHGSLLEALSEYGPN. The tract at residues 288–296 is short helix H1-2; the sequence is PREVGEKFH. Positions 298–304 are short helix H2-2; sequence SLLEALS. Residues 310–332 traverse the membrane as a helical segment; that stretch reads YLAYFGSFVTIGLLWFVHHSLFL. Residues 333–338 lie on the Cytoplasmic side of the membrane; the sequence is YVTKAT. The chain crosses the membrane as a helical span at residues 339–360; it reads RLMGLLNILSLAFIGGLPLAYQ. Residues 361–375 lie on the Lumenal side of the membrane; it reads LTSEFAEKSHNEIEA. A helical transmembrane segment spans residues 376–396; sequence IQVSCVITFFASIFQFAIWTT. Over 397–416 the chain is Cytoplasmic; the sequence is ALLHERETLHPFARYGGKEH. Residues 417-440 traverse the membrane as a helical segment; that stretch reads AFMFAKLALYPCVSLGAFFLTCLL. The Lumenal segment spans residues 441–442; the sequence is SE. The chain crosses the membrane as a helical span at residues 443–469; it reads FSTEIFHLMQIVIPFAFLALRIFVRIS. Over 470-501 the chain is Cytoplasmic; that stretch reads LTVIKSVMSLSRRKVVLLEEEEACLSPTETHS.

Belongs to the TMEM175 family. As to quaternary structure, homodimer.

Its subcellular location is the endosome membrane. The protein resides in the lysosome membrane. It catalyses the reaction H(+)(in) = H(+)(out). The enzyme catalyses K(+)(in) = K(+)(out). With respect to regulation, active at low pH (under pH 4.6): proton channel activity is activated by luminal side protons. Polyunsaturated fatty acids, such as arachidonic acid, also activate the channel activity. Its function is as follows. Proton-activated proton channel that catalyzes proton efflux from endosomes and lysosomes to maintain a steady-state pH. Activated at low pH (under pH 4.6) by luminal side protons: selectively mediates lysosomal proton release from lysosomes, eliciting a proton leak that balances V-ATPase activity to maintain pH homeostasis. Regulation of lumenal pH stability is required for autophagosome-lysosome fusion. Also acts as a potassium channel at higher pH, regulating potassium conductance in endosomes and lysosomes. This Gallus gallus (Chicken) protein is Endosomal/lysosomal proton channel TMEM175.